The primary structure comprises 248 residues: Cyclin-Q (248 aa).

Methionine 1 is subject to N-acetylmethionine. Over residues 1 to 12 the composition is skewed to gly residues; the sequence is MEAPEGGGGGPA. The tract at residues 1-21 is disordered; sequence MEAPEGGGGGPAARGPEGQPA.

Belongs to the cyclin family. Cyclin-like FAM58 subfamily. As to quaternary structure, associates with CDK10 to promote its kinase activity. Interacts with SALL1.

Its function is as follows. Activating cyclin for the cyclin-associated kinase CDK10. This Homo sapiens (Human) protein is Cyclin-Q.